A 742-amino-acid polypeptide reads, in one-letter code: Photosystem I P700 chlorophyll a apoprotein A2 (742 aa).

8 consecutive transmembrane segments (helical) span residues 46-69 (LFST…FHIA), 135-158 (LFQA…LHLQ), 175-199 (LNHH…HVAI), 273-291 (IAHH…GHMY), 336-359 (LHFQ…QHMG), 375-401 (SALY…IFFV), 423-445 (ALIS…IYVH), and 525-543 (FLVH…LILI). [4Fe-4S] cluster contacts are provided by Cys567 and Cys576. The next 2 helical transmembrane spans lie at 583–604 (AMYL…YWHW) and 651–673 (LSVW…MFLI). Divinyl chlorophyll a contacts are provided by His662, Met670, and Tyr678. Trp679 provides a ligand contact to phylloquinone. A helical transmembrane segment spans residues 715-735 (LVGLAHFTIGNILTFGAFVIA).

It belongs to the PsaA/PsaB family. The PsaA/B heterodimer binds the P700 divinyl chlorophyll special pair and subsequent electron acceptors. PSI consists of a core antenna complex that captures photons, and an electron transfer chain that converts photonic excitation into a charge separation. The cyanobacterial PSI reaction center is composed of one copy each of PsaA,B,C,D,E,F,I,J,K,L,M and X, and forms trimeric complexes. Requires PSI electron transfer chain: 5 divinyl chlorophyll a, 1 divinyl chlorophyll a', 2 phylloquinones and 3 4Fe-4S clusters. PSI core antenna: 90 divinyl chlorophyll a, 22 carotenoids, 3 phospholipids and 1 galactolipid. P700 is a divinyl chlorophyll a/divinyl chlorophyll a' dimer, A0 is one or more divinyl chlorophyll a, A1 is one or both phylloquinones and FX is a shared 4Fe-4S iron-sulfur center. as cofactor.

It localises to the cellular thylakoid membrane. The catalysed reaction is reduced [plastocyanin] + hnu + oxidized [2Fe-2S]-[ferredoxin] = oxidized [plastocyanin] + reduced [2Fe-2S]-[ferredoxin]. PsaA and PsaB bind P700, the primary electron donor of photosystem I (PSI), as well as the electron acceptors A0, A1 and FX. PSI is a plastocyanin/cytochrome c6-ferredoxin oxidoreductase, converting photonic excitation into a charge separation, which transfers an electron from the donor P700 chlorophyll pair to the spectroscopically characterized acceptors A0, A1, FX, FA and FB in turn. Oxidized P700 is reduced on the lumenal side of the thylakoid membrane by plastocyanin or cytochrome c6. The polypeptide is Photosystem I P700 chlorophyll a apoprotein A2 (Prochlorococcus marinus subsp. pastoris (strain CCMP1986 / NIES-2087 / MED4)).